A 236-amino-acid chain; its full sequence is MGQKINPIGLRLGINRTWDSRWYANTGEYGKLLHEDVKIREFLTEELKQAAISKIVIERPHKKCRVTIHSARPGIIIGKKGADIEKLRKKLSEMTNADTSLNIVEVRKPEVDATLIAQSIAQQLERRVAFRRAMKRAVQSAMRLGAEGIRINCSGRLGGAEIARMEWYREGRVPLHTLRADIDYGTAEAKTAYGICGVKVWVFKGEILEHDPMASERRAVEGDNQGSSSNRRRENA.

One can recognise a KH type-2 domain in the interval 39–107 (IREFLTEELK…DTSLNIVEVR (69 aa)). A disordered region spans residues 214 to 236 (ASERRAVEGDNQGSSSNRRRENA).

This sequence belongs to the universal ribosomal protein uS3 family. As to quaternary structure, part of the 30S ribosomal subunit. Forms a tight complex with proteins S10 and S14.

Binds the lower part of the 30S subunit head. Binds mRNA in the 70S ribosome, positioning it for translation. In Brucella abortus (strain S19), this protein is Small ribosomal subunit protein uS3.